A 765-amino-acid chain; its full sequence is Probable beta-glucosidase M (765 aa).

The N-terminal stretch at 1-19 (MHSISALLSLLGGLALSSA) is a signal peptide. 5 N-linked (GlcNAc...) asparagine glycosylation sites follow: Asn-24, Asn-71, Asn-93, Asn-126, and Asn-258. Asp-286 is a catalytic residue. Residues Asn-314, Asn-321, Asn-432, Asn-519, Asn-541, and Asn-647 are each glycosylated (N-linked (GlcNAc...) asparagine).

Belongs to the glycosyl hydrolase 3 family.

It is found in the secreted. It catalyses the reaction Hydrolysis of terminal, non-reducing beta-D-glucosyl residues with release of beta-D-glucose.. It participates in glycan metabolism; cellulose degradation. Its function is as follows. Beta-glucosidases are one of a number of cellulolytic enzymes involved in the degradation of cellulosic biomass. Catalyzes the last step releasing glucose from the inhibitory cellobiose. This Aspergillus niger (strain ATCC MYA-4892 / CBS 513.88 / FGSC A1513) protein is Probable beta-glucosidase M (bglM).